The primary structure comprises 805 residues: Arginine/serine-rich protein PNISR (805 aa).

The span at 74–88 shows a compositional bias: polar residues; it reads PNNHGNFQGDSNFNR. 2 disordered regions span residues 74–331 and 382–805; these read PNNH…EEKE and LTGL…SRSR. Pro residues-rich tracts occupy residues 100–115 and 183–195; these read PPHPPPDQPWMPPTPG and YWQPGPPGPPAPP. Residues 197 to 210 are compositionally biased toward basic and acidic residues; sequence NRRERPSSFRDRQR. Residues S204 and S211 each carry the phosphoserine modification. Residue K218 forms a Glycyl lysine isopeptide (Lys-Gly) (interchain with G-Cter in SUMO2) linkage. The stretch at 237–276 forms a coiled coil; it reads REGLEKMEREKQKKLEKERMEQQRSQLSKKEKKATEDAEG. The segment covering 238–258 has biased composition (basic and acidic residues); that stretch reads EGLEKMEREKQKKLEKERMEQ. Phosphoserine occurs at positions 290, 304, 313, and 321. Acidic residues predominate over residues 290 to 299; it reads SDEEEEDTEN. A compositionally biased stretch (gly residues) spans 384–393; it reads GLGGLGGYGS. Residues 421–463 show a composition bias toward basic and acidic residues; the sequence is QKQEAFWRKEKEQQLLHDKQMEEEKQQTERVTKEMNEFIHKEQ. Residues 429 to 461 are a coiled coil; the sequence is KEKEQQLLHDKQMEEEKQQTERVTKEMNEFIHK. Phosphoserine occurs at positions 465 and 467. Basic and acidic residues-rich tracts occupy residues 470-486 and 494-506; these read EAREADGDVVNEKKRTP and EPKKEHKEKEKQG. A Phosphothreonine modification is found at T485. K496 is covalently cross-linked (Glycyl lysine isopeptide (Lys-Gly) (interchain with G-Cter in SUMO2)). Low complexity predominate over residues 508-550; that stretch reads SRSGSSSSGSSSSNSRTSSTSSTVSSSSYSSSSGSSRTSSRSS. 3 stretches are compositionally biased toward basic residues: residues 551–579, 587–598, and 607–639; these read SPKRKKRHSRSRSPTIKARRSRSRSYSRR, ARVKIRDRRRSN, and RRNRSPSRERRRSRSRSRDRRTNRASRSRSRDR. The segment covering 659–721 has biased composition (basic and acidic residues); the sequence is EAKEQERKKE…KRKRESERTF (63 aa). Residues 673 to 703 adopt a coiled-coil conformation; that stretch reads IDKDRKKKDKEREREQDKRKEKQKREEKDFK. Residue K703 forms a Glycyl lysine isopeptide (Lys-Gly) (interchain with G-Cter in SUMO2) linkage. Residue S726 is modified to Phosphoserine. Residues 732–753 are compositionally biased toward basic and acidic residues; the sequence is IRHDSRQDSKKSTTKDSKKHSG. Residues 754–767 are compositionally biased toward low complexity; it reads SDSSGRSSSESPGS. 2 stretches are compositionally biased toward basic residues: residues 771-781 and 789-805; these read KKAKKPKHSRS and RSGKKASRKHKSKSRSR.

This sequence belongs to the splicing factor SR family. As to quaternary structure, interacts with PNN. In terms of tissue distribution, expressed in heart, skeletal muscle, thymus, spleen, kidney, liver, placenta and leukocytes.

It is found in the nucleus speckle. The sequence is that of Arginine/serine-rich protein PNISR (PNISR) from Homo sapiens (Human).